Reading from the N-terminus, the 221-residue chain is Probable septum site-determining protein MinC (221 aa).

It belongs to the MinC family. As to quaternary structure, interacts with MinD and FtsZ.

In terms of biological role, cell division inhibitor that blocks the formation of polar Z ring septums. Rapidly oscillates between the poles of the cell to destabilize FtsZ filaments that have formed before they mature into polar Z rings. Prevents FtsZ polymerization. The protein is Probable septum site-determining protein MinC of Shewanella sp. (strain MR-7).